Here is a 210-residue protein sequence, read N- to C-terminus: Urease accessory protein UreG (210 aa).

Residue 14–21 (GPVGSGKT) participates in GTP binding.

Belongs to the SIMIBI class G3E GTPase family. UreG subfamily. As to quaternary structure, homodimer. UreD, UreF and UreG form a complex that acts as a GTP-hydrolysis-dependent molecular chaperone, activating the urease apoprotein by helping to assemble the nickel containing metallocenter of UreC. The UreE protein probably delivers the nickel.

Its subcellular location is the cytoplasm. Functionally, facilitates the functional incorporation of the urease nickel metallocenter. This process requires GTP hydrolysis, probably effectuated by UreG. The chain is Urease accessory protein UreG from Rhodopseudomonas palustris (strain BisA53).